Here is a 395-residue protein sequence, read N- to C-terminus: Inactive serine protease 54 (395 aa).

A signal peptide spans 1–30; it reads MVSAAGLSGDGKMRGVLLVLLGLLYSSTSC. The 233-residue stretch at 37 to 269 folds into the Peptidase S1 domain; the sequence is VFYGPDPKEG…YSKWITSKAE (233 aa). N-linked (GlcNAc...) asparagine glycosylation is present at asparagine 123. 3 cysteine pairs are disulfide-bonded: cysteine 164-cysteine 227, cysteine 195-cysteine 205, and cysteine 217-cysteine 248. The disordered stretch occupies residues 324–348; sequence RLGNSSRDSLDVREKDVKESGRSPE. Residue asparagine 327 is glycosylated (N-linked (GlcNAc...) asparagine). Residues 331–345 show a composition bias toward basic and acidic residues; it reads DSLDVREKDVKESGR.

It belongs to the peptidase S1 family. Plasma kallikrein subfamily.

It is found in the secreted. The protein is Inactive serine protease 54 (PRSS54) of Homo sapiens (Human).